The sequence spans 663 residues: DNA ligase 1 (663 aa).

NAD(+) is bound by residues 28–32 and 76–77; these read DKEYD and SL. Lys-118 serves as the catalytic N6-AMP-lysine intermediate. Positions 139, 173, and 310 each coordinate NAD(+). Cys-403, Cys-406, Cys-419, and Cys-425 together coordinate Zn(2+). The region spanning 583–663 is the BRCT domain; sequence VSESVFNDKT…KFEELIESVK (81 aa).

Belongs to the NAD-dependent DNA ligase family. LigA subfamily. Requires Mg(2+) as cofactor. Mn(2+) serves as cofactor.

The catalysed reaction is NAD(+) + (deoxyribonucleotide)n-3'-hydroxyl + 5'-phospho-(deoxyribonucleotide)m = (deoxyribonucleotide)n+m + AMP + beta-nicotinamide D-nucleotide.. Its function is as follows. DNA ligase that catalyzes the formation of phosphodiester linkages between 5'-phosphoryl and 3'-hydroxyl groups in double-stranded DNA using NAD as a coenzyme and as the energy source for the reaction. It is essential for DNA replication and repair of damaged DNA. This is DNA ligase 1 from Clostridium acetobutylicum (strain ATCC 824 / DSM 792 / JCM 1419 / IAM 19013 / LMG 5710 / NBRC 13948 / NRRL B-527 / VKM B-1787 / 2291 / W).